The following is a 155-amino-acid chain: Small ribosomal subunit protein uS7cz/uS7cy (155 aa).

It belongs to the universal ribosomal protein uS7 family. As to quaternary structure, part of the 30S ribosomal subunit.

It is found in the plastid. Its subcellular location is the chloroplast. In terms of biological role, one of the primary rRNA binding proteins, it binds directly to 16S rRNA where it nucleates assembly of the head domain of the 30S subunit. The chain is Small ribosomal subunit protein uS7cz/uS7cy (rps7-A) from Anthoceros angustus (Hornwort).